The sequence spans 283 residues: 4-diphosphocytidyl-2-C-methyl-D-erythritol kinase (283 aa).

Lys-10 is an active-site residue. 99–109 (PMGGGLGGGSS) provides a ligand contact to ATP. Asp-141 is an active-site residue.

It belongs to the GHMP kinase family. IspE subfamily. As to quaternary structure, homodimer.

It carries out the reaction 4-CDP-2-C-methyl-D-erythritol + ATP = 4-CDP-2-C-methyl-D-erythritol 2-phosphate + ADP + H(+). Its pathway is isoprenoid biosynthesis; isopentenyl diphosphate biosynthesis via DXP pathway; isopentenyl diphosphate from 1-deoxy-D-xylulose 5-phosphate: step 3/6. Its function is as follows. Catalyzes the phosphorylation of the position 2 hydroxy group of 4-diphosphocytidyl-2C-methyl-D-erythritol. The protein is 4-diphosphocytidyl-2-C-methyl-D-erythritol kinase of Salmonella typhi.